Consider the following 339-residue polypeptide: Ribosomal RNA small subunit methyltransferase H (339 aa).

S-adenosyl-L-methionine-binding positions include 36–38, aspartate 55, phenylalanine 82, aspartate 103, and glutamine 110; that span reads GGY. The disordered stretch occupies residues 286–319; it reads GPIGPSEAEATANPRARSAKLRAGERTDAPIPEP.

It belongs to the methyltransferase superfamily. RsmH family.

It is found in the cytoplasm. It carries out the reaction cytidine(1402) in 16S rRNA + S-adenosyl-L-methionine = N(4)-methylcytidine(1402) in 16S rRNA + S-adenosyl-L-homocysteine + H(+). Functionally, specifically methylates the N4 position of cytidine in position 1402 (C1402) of 16S rRNA. The protein is Ribosomal RNA small subunit methyltransferase H of Methylobacterium nodulans (strain LMG 21967 / CNCM I-2342 / ORS 2060).